The chain runs to 119 residues: Ribonuclease P protein component (119 aa).

This sequence belongs to the RnpA family. In terms of assembly, consists of a catalytic RNA component (M1 or rnpB) and a protein subunit.

It catalyses the reaction Endonucleolytic cleavage of RNA, removing 5'-extranucleotides from tRNA precursor.. In terms of biological role, RNaseP catalyzes the removal of the 5'-leader sequence from pre-tRNA to produce the mature 5'-terminus. It can also cleave other RNA substrates such as 4.5S RNA. The protein component plays an auxiliary but essential role in vivo by binding to the 5'-leader sequence and broadening the substrate specificity of the ribozyme. In Pectobacterium atrosepticum (strain SCRI 1043 / ATCC BAA-672) (Erwinia carotovora subsp. atroseptica), this protein is Ribonuclease P protein component.